We begin with the raw amino-acid sequence, 216 residues long: UPF0502 protein VC0395_0676/VC395_A0574 (216 aa).

The protein belongs to the UPF0502 family.

This Vibrio cholerae serotype O1 (strain ATCC 39541 / Classical Ogawa 395 / O395) protein is UPF0502 protein VC0395_0676/VC395_A0574.